The chain runs to 233 residues: Large ribosomal subunit protein uL1 (233 aa).

The protein belongs to the universal ribosomal protein uL1 family. As to quaternary structure, part of the 50S ribosomal subunit.

Binds directly to 23S rRNA. The L1 stalk is quite mobile in the ribosome, and is involved in E site tRNA release. Functionally, protein L1 is also a translational repressor protein, it controls the translation of the L11 operon by binding to its mRNA. The sequence is that of Large ribosomal subunit protein uL1 from Proteus mirabilis (strain HI4320).